A 107-amino-acid chain; its full sequence is MMNLVNKSLEENGSFLTAVYIFCAFVALYLLGRALHAFVQAADACCLFWYTWVVVPGAKGTAFVYKHTYGKKLNNPELESVIVNEFPKNGWNNKSPANFQNDGKLHS.

Topologically, residues 1 to 11 (MMNLVNKSLEE) are virion surface. The helical transmembrane segment at 12–32 (NGSFLTAVYIFCAFVALYLLG) threads the bilayer. The Intravirion portion of the chain corresponds to 33-107 (RALHAFVQAA…NFQNDGKLHS (75 aa)).

Belongs to the gammacoronaviruses E protein family. In terms of assembly, homooligomer. Interacts with the M membrane protein in the budding compartment of the host cell, which is located between endoplasmic reticulum and the Golgi complex. The cytoplasmic tails of both proteins are important for this function. Interacts with Nucleoprotein.

The protein resides in the host Golgi apparatus membrane. Its function is as follows. Plays a central role in virus morphogenesis and assembly. Acts as a viroporin and self-assembles in host membranes forming pentameric protein-lipid pores that allow ion transport. Also plays a role in the induction of apoptosis. This is Envelope small membrane protein from Gallus gallus (Chicken).